Consider the following 67-residue polypeptide: UPF0434 protein Patl_1782 (67 aa).

The protein belongs to the UPF0434 family.

The protein is UPF0434 protein Patl_1782 of Pseudoalteromonas atlantica (strain T6c / ATCC BAA-1087).